Reading from the N-terminus, the 208-residue chain is AN1-type zinc finger protein 6 (208 aa).

The A20-type zinc finger occupies 8–42 (SQVPMLCSTGCGFYGNPRTNGMCSVCYKEHLQRQN). The Zn(2+) site is built by Cys14, Cys18, Cys30, and Cys33. The segment covering 41–68 (QNSSNGRISPPATSVSSLSESLPVQCTD) has biased composition (polar residues). The segment at 41–140 (QNSSNGRISP…PSEEQSKSLE (100 aa)) is disordered. Ser49 carries the post-translational modification Phosphoserine. Residues 80–94 (STSSSMQPSPVSNQS) are compositionally biased toward low complexity. 2 stretches are compositionally biased toward polar residues: residues 95–110 (LLSE…STSV) and 120–133 (VQAS…QPSE). The AN1-type zinc-finger motif lies at 143–189 (KQKKNRCFMCRKKVGLTGFECRCGNVYCGVHRYSDVHNCSYNYKADA). 8 residues coordinate Zn(2+): Cys149, Cys152, Cys163, Cys165, Cys170, His173, His179, and Cys181. The residue at position 204 (Lys204) is an N6-acetyllysine.

In terms of assembly, interacts with PKN1. Interacts with TRAF2. Interacts with mono- and polyubiquitin. Interacts with PEX6. Interacts with PEX5 (Cys-linked ubiquitinated). Widely expressed with high level in heart, skeletal muscle, liver, kidney and placenta.

It localises to the cytoplasm. Involved in regulation of TNF-alpha induced NF-kappa-B activation and apoptosis. Involved in modulation of 'Lys-48'-linked polyubiquitination status of TRAF2 and decreases association of TRAF2 with RIPK1. Required for PTS1 target sequence-dependent protein import into peroxisomes and PEX5 stability; may cooperate with PEX6. In vitro involved in PEX5 export from the cytosol to peroxisomes. The sequence is that of AN1-type zinc finger protein 6 (ZFAND6) from Homo sapiens (Human).